Consider the following 258-residue polypeptide: UPF0246 protein YE0603 (258 aa).

It belongs to the UPF0246 family.

This Yersinia enterocolitica serotype O:8 / biotype 1B (strain NCTC 13174 / 8081) protein is UPF0246 protein YE0603.